A 155-amino-acid chain; its full sequence is NADPH-dependent 7-cyano-7-deazaguanine reductase (155 aa).

Cysteine 53 functions as the Thioimide intermediate in the catalytic mechanism. Aspartate 60 serves as the catalytic Proton donor. Substrate contacts are provided by residues 75–77 (VES) and 94–95 (HE).

Belongs to the GTP cyclohydrolase I family. QueF type 1 subfamily.

Its subcellular location is the cytoplasm. It carries out the reaction 7-aminomethyl-7-carbaguanine + 2 NADP(+) = 7-cyano-7-deazaguanine + 2 NADPH + 3 H(+). It participates in tRNA modification; tRNA-queuosine biosynthesis. In terms of biological role, catalyzes the NADPH-dependent reduction of 7-cyano-7-deazaguanine (preQ0) to 7-aminomethyl-7-deazaguanine (preQ1). The protein is NADPH-dependent 7-cyano-7-deazaguanine reductase of Brucella suis (strain ATCC 23445 / NCTC 10510).